A 115-amino-acid chain; its full sequence is Nitrogenase-stabilizing/protective protein NifW (115 aa).

The protein belongs to the NifW family. In terms of assembly, homotrimer; associates with NifD.

May protect the nitrogenase Fe-Mo protein from oxidative damage. This is Nitrogenase-stabilizing/protective protein NifW from Azotobacter vinelandii (strain DJ / ATCC BAA-1303).